The chain runs to 466 residues: 3-isopropylmalate dehydratase large subunit (466 aa).

[4Fe-4S] cluster contacts are provided by C347, C407, and C410.

Belongs to the aconitase/IPM isomerase family. LeuC type 1 subfamily. In terms of assembly, heterodimer of LeuC and LeuD. The cofactor is [4Fe-4S] cluster.

The catalysed reaction is (2R,3S)-3-isopropylmalate = (2S)-2-isopropylmalate. It participates in amino-acid biosynthesis; L-leucine biosynthesis; L-leucine from 3-methyl-2-oxobutanoate: step 2/4. Functionally, catalyzes the isomerization between 2-isopropylmalate and 3-isopropylmalate, via the formation of 2-isopropylmaleate. This chain is 3-isopropylmalate dehydratase large subunit, found in Cronobacter sakazakii (strain ATCC BAA-894) (Enterobacter sakazakii).